The sequence spans 94 residues: Potassium channel protein kcv (94 aa).

Residues 14–34 (FMIHLFILAMFVMIYKFFPGG) traverse the membrane as a helical segment. N38 carries an N-linked (GlcNAc...) asparagine; by host glycan. A helical transmembrane segment spans residues 74–94 (TGAKLCTIAHIVTVFFIVLTL).

Belongs to the two pore domain potassium channel (TC 1.A.1.12) family.

It localises to the membrane. Potassium-selective channel essential in the virus replication cycle. May be involved in preventing multiple infections (Potential). This Paramecium bursaria Chlorella virus 1 (PBCV-1) protein is Potassium channel protein kcv (A250R).